The chain runs to 349 residues: Ribosome production factor 1 (349 aa).

The segment at 1–105 is disordered; the sequence is MAKAGDKSSS…APPKPVPKTI (105 aa). Over residues 87-97 the composition is skewed to basic and acidic residues; sequence KEREALGDKAP. Positions 142 to 325 constitute a Brix domain; sequence PKILITTSDR…LRSLQKGTFD (184 aa). Residues 303–320 are RNA-binding; that stretch reads VGIQELGPRFTLKLRSLQ.

The protein localises to the nucleus. It localises to the nucleolus. May be required for ribosome biogenesis. The sequence is that of Ribosome production factor 1 (RPF1) from Pongo abelii (Sumatran orangutan).